Here is a 310-residue protein sequence, read N- to C-terminus: N-acetyl-gamma-glutamyl-phosphate reductase (310 aa).

Cys-117 is a catalytic residue.

The protein belongs to the NAGSA dehydrogenase family. Type 2 subfamily.

It localises to the cytoplasm. It carries out the reaction N-acetyl-L-glutamate 5-semialdehyde + phosphate + NADP(+) = N-acetyl-L-glutamyl 5-phosphate + NADPH + H(+). It participates in amino-acid biosynthesis; L-arginine biosynthesis; N(2)-acetyl-L-ornithine from L-glutamate: step 3/4. Catalyzes the NADPH-dependent reduction of N-acetyl-5-glutamyl phosphate to yield N-acetyl-L-glutamate 5-semialdehyde. This is N-acetyl-gamma-glutamyl-phosphate reductase from Rhizobium leguminosarum bv. trifolii (strain WSM2304).